Here is a 102-residue protein sequence, read N- to C-terminus: Small ribosomal subunit protein uS10 (102 aa).

The protein belongs to the universal ribosomal protein uS10 family. In terms of assembly, part of the 30S ribosomal subunit.

Its function is as follows. Involved in the binding of tRNA to the ribosomes. The chain is Small ribosomal subunit protein uS10 from Clostridium perfringens (strain ATCC 13124 / DSM 756 / JCM 1290 / NCIMB 6125 / NCTC 8237 / Type A).